The following is a 198-amino-acid chain: ATP-dependent Clp protease proteolytic subunit (198 aa).

Serine 98 acts as the Nucleophile in catalysis. Residue histidine 123 is part of the active site.

This sequence belongs to the peptidase S14 family. As to quaternary structure, fourteen ClpP subunits assemble into 2 heptameric rings which stack back to back to give a disk-like structure with a central cavity, resembling the structure of eukaryotic proteasomes.

It localises to the cytoplasm. The enzyme catalyses Hydrolysis of proteins to small peptides in the presence of ATP and magnesium. alpha-casein is the usual test substrate. In the absence of ATP, only oligopeptides shorter than five residues are hydrolyzed (such as succinyl-Leu-Tyr-|-NHMec, and Leu-Tyr-Leu-|-Tyr-Trp, in which cleavage of the -Tyr-|-Leu- and -Tyr-|-Trp bonds also occurs).. Its function is as follows. Cleaves peptides in various proteins in a process that requires ATP hydrolysis. Has a chymotrypsin-like activity. Plays a major role in the degradation of misfolded proteins. The chain is ATP-dependent Clp protease proteolytic subunit from Listeria innocua serovar 6a (strain ATCC BAA-680 / CLIP 11262).